The following is a 1132-amino-acid chain: Large proline-rich protein BAG6 (1132 aa).

The residue at position 1 (M1) is an N-acetylmethionine. Residues 17–92 enclose the Ubiquitin-like domain; sequence LEVLVKTLDS…HLVERAPPQT (76 aa). Disordered stretches follow at residues 87–126 and 189–272; these read RAPP…SVHD and LQCR…NHPS. Residues 95–108 are compositionally biased toward low complexity; the sequence is PSGASSGTGSASAT. Residues S96 and S113 each carry the phosphoserine modification. T117 carries the post-translational modification Phosphothreonine. Composition is skewed to pro residues over residues 200 to 210 and 251 to 262; these read SQPPPQPPAVT and TPGPAPAGPTPA. Copy 1 of the repeat occupies 242 to 270; the sequence is RAPAQNPELTPGPAPAGPTPAPETNAPNH. Positions 242-636 are 4 X 29 AA approximate repeats; that stretch reads RAPAQNPELT…VASPTITVAM (395 aa). Position 350 is a phosphothreonine (T350). Disordered regions lie at residues 385-441, 461-528, and 560-603; these read VTMT…TSHP, IQDS…TLQG, and PGMA…PSMA. Residues 393-407 are compositionally biased toward pro residues; the sequence is RPPPTPNAEAPPPGP. The segment covering 408–426 has biased composition (low complexity); sequence GQASSVAPSSTNVESSAEG. Copy 2 of the repeat occupies 415 to 443; sequence PSSTNVESSAEGAPPPGPAPPPATSHPRV. Composition is skewed to pro residues over residues 427–438 and 507–520; these read APPPGPAPPPAT and PTPP…PGGP. The segment covering 569–586 has biased composition (low complexity); the sequence is ATASASAGTTNTATTAGP. Tandem repeats lie at residues 574 to 602 and 608 to 636. Residues 588–599 are compositionally biased toward pro residues; it reads PGGPAQPPPTPQ. The tract at residues 651–692 is disordered; it reads QATQTAPPPPPPPPPPPPAPEQQTMPPPGSPSGGAGSPGGLG. The span at 656–680 shows a compositional bias: pro residues; that stretch reads APPPPPPPPPPPPAPEQQTMPPPGS. Positions 681–692 are enriched in gly residues; sequence PSGGAGSPGGLG. Phosphoserine occurs at positions 832, 964, and 973. The tract at residues 947 to 1132 is disordered; sequence PQPLPEEPME…NAQRAFADDP (186 aa). Residues 1005-1020 show a composition bias toward low complexity; it reads AETEPWAAAVPPEWVP. The interval 1010 to 1040 is required for interaction with GET4; it reads WAAAVPPEWVPIIQQDIQSQRKVKPQPPLSD. The Nuclear localization site motif lies at 1012-1054; it reads AAVPPEWVPIIQQDIQSQRKVKPQPPLSDAYLSGMPAKRRKTM. Residues 1022-1132 form a sufficient for the delivery of client proteins to the endoplasmic reticulum region; that stretch reads IQQDIQSQRK…NAQRAFADDP (111 aa). At T1053 the chain carries Phosphothreonine. Residues 1058-1115 are BAG-similar domain, required and sufficient for interaction with UBL4A; that stretch reads GPQLLLSEAVSRAAKAAGARPLTSPESLSRDLEAPEVQESYRQQLRSDIQKRLQEDPN. The span at 1066–1076 shows a compositional bias: low complexity; that stretch reads AVSRAAKAAGA. Residues S1081 and S1117 each carry the phosphoserine modification.

Component of the BAG6/BAT3 complex, also named BAT3 complex, at least composed of BAG6, UBL4A and GET4/TRC35. Interacts with GET4; the interaction is direct and localizes BAG6 in the cytosol. Interacts with UBL4A; the interaction is direct and required for UBL4A protein stability. Interacts with AIFM1. Interacts with HSPA2. Interacts with CTCFL. Interacts with p300/EP300. Interacts (via ubiquitin-like domain) with RNF126; required for BAG6-dependent ubiquitination of proteins mislocalized to the cytosol. Interacts (via ubiquitin-like domain) with SGTA; SGTA competes with RNF126 by binding the same region of BAG6, thereby promoting deubiquitination of BAG6-target proteins and rescuing them from degradation. Interacts with ricin A chain. Interacts with VCP and AMFR; both form the VCP/p97-AMFR/gp78 complex. Interacts with SYVN1. Interacts with USP13; the interaction is direct and may mediate UBL4A deubiquitination. Interacts with ZFAND2B. Interacts with KPNA2. Interacts with UBQLN4. As to quaternary structure, (Microbial infection) Interacts with L.pneumophila Lpg2160 and LegU1 proteins. In terms of processing, ricin can induce a cleavage by the caspase CASP3. The released C-terminal peptide induces apoptosis. Post-translationally, (Microbial infection) In case of infection by L.pneumophila, ubiquitinated by the SCF(LegU1) complex. In terms of tissue distribution, expressed by immature dendritic cells (at protein level).

Its subcellular location is the cytoplasm. The protein localises to the cytosol. The protein resides in the nucleus. It localises to the secreted. It is found in the extracellular exosome. Its function is as follows. ATP-independent molecular chaperone preventing the aggregation of misfolded and hydrophobic patches-containing proteins. Functions as part of a cytosolic protein quality control complex, the BAG6/BAT3 complex, which maintains these client proteins in a soluble state and participates in their proper delivery to the endoplasmic reticulum or alternatively can promote their sorting to the proteasome where they undergo degradation. The BAG6/BAT3 complex is involved in the post-translational delivery of tail-anchored/type II transmembrane proteins to the endoplasmic reticulum membrane. Recruited to ribosomes, it interacts with the transmembrane region of newly synthesized tail-anchored proteins and together with SGTA and ASNA1 mediates their delivery to the endoplasmic reticulum. Client proteins that cannot be properly delivered to the endoplasmic reticulum are ubiquitinated by RNF126, an E3 ubiquitin-protein ligase associated with BAG6 and are sorted to the proteasome. SGTA which prevents the recruitment of RNF126 to BAG6 may negatively regulate the ubiquitination and the proteasomal degradation of client proteins. Similarly, the BAG6/BAT3 complex also functions as a sorting platform for proteins of the secretory pathway that are mislocalized to the cytosol either delivering them to the proteasome for degradation or to the endoplasmic reticulum. The BAG6/BAT3 complex also plays a role in the endoplasmic reticulum-associated degradation (ERAD), a quality control mechanism that eliminates unwanted proteins of the endoplasmic reticulum through their retrotranslocation to the cytosol and their targeting to the proteasome. It maintains these retrotranslocated proteins in an unfolded yet soluble state condition in the cytosol to ensure their proper delivery to the proteasome. BAG6 is also required for selective ubiquitin-mediated degradation of defective nascent chain polypeptides by the proteasome. In this context, it may participate in the production of antigenic peptides and play a role in antigen presentation in immune response. BAG6 is also involved in endoplasmic reticulum stress-induced pre-emptive quality control, a mechanism that selectively attenuates the translocation of newly synthesized proteins into the endoplasmic reticulum and reroutes them to the cytosol for proteasomal degradation. BAG6 may ensure the proper degradation of these proteins and thereby protects the endoplasmic reticulum from protein overload upon stress. By inhibiting the polyubiquitination and subsequent proteasomal degradation of HSPA2 it may also play a role in the assembly of the synaptonemal complex during spermatogenesis. Also positively regulates apoptosis by interacting with and stabilizing the proapoptotic factor AIFM1. By controlling the steady-state expression of the IGF1R receptor, indirectly regulates the insulin-like growth factor receptor signaling pathway. In terms of biological role, involved in DNA damage-induced apoptosis: following DNA damage, accumulates in the nucleus and forms a complex with p300/EP300, enhancing p300/EP300-mediated p53/TP53 acetylation leading to increase p53/TP53 transcriptional activity. When nuclear, may also act as a component of some chromatin regulator complex that regulates histone 3 'Lys-4' dimethylation (H3K4me2). Released extracellularly via exosomes, it is a ligand of the natural killer/NK cells receptor NCR3 and stimulates NK cells cytotoxicity. It may thereby trigger NK cells cytotoxicity against neighboring tumor cells and immature myeloid dendritic cells (DC). Functionally, mediates ricin-induced apoptosis. This Homo sapiens (Human) protein is Large proline-rich protein BAG6.